The sequence spans 143 residues: Transcription antitermination protein NusB (143 aa).

This sequence belongs to the NusB family.

Functionally, involved in transcription antitermination. Required for transcription of ribosomal RNA (rRNA) genes. Binds specifically to the boxA antiterminator sequence of the ribosomal RNA (rrn) operons. The protein is Transcription antitermination protein NusB of Buchnera aphidicola subsp. Acyrthosiphon pisum (strain 5A).